A 202-amino-acid polypeptide reads, in one-letter code: Protein SYM1 (202 aa).

Helical transmembrane passes span 15–31, 48–66, 82–99, and 143–159; these read MAVT…DCVS, AGIY…FRFL, AVFA…MGLL, and VLAS…FLAY.

It belongs to the peroxisomal membrane protein PXMP2/4 family.

The protein resides in the mitochondrion inner membrane. In terms of biological role, may be involved in cellular response to stress. Required to maintain mitochondrial DNA (mtDNA) integrity and stability. This chain is Protein SYM1 (SYM1), found in Yarrowia lipolytica (strain CLIB 122 / E 150) (Yeast).